Consider the following 324-residue polypeptide: NADH-ubiquinone oxidoreductase chain 1 (324 aa).

The next 8 membrane-spanning stretches (helical) occupy residues 9 to 29 (LTMA…LTLV), 75 to 95 (ILFI…WIPL), 106 to 126 (LGLL…LWSG), 142 to 162 (VAQT…VIML), 177 to 197 (PLYL…STLA), 228 to 248 (LFFL…AILF), 259 to 279 (ELFP…FLWV), and 300 to 320 (LPLT…YAGI).

Belongs to the complex I subunit 1 family.

The protein localises to the mitochondrion inner membrane. The enzyme catalyses a ubiquinone + NADH + 5 H(+)(in) = a ubiquinol + NAD(+) + 4 H(+)(out). Core subunit of the mitochondrial membrane respiratory chain NADH dehydrogenase (Complex I) that is believed to belong to the minimal assembly required for catalysis. Complex I functions in the transfer of electrons from NADH to the respiratory chain. The immediate electron acceptor for the enzyme is believed to be ubiquinone. The chain is NADH-ubiquinone oxidoreductase chain 1 (MT-ND1) from Struthio camelus (Common ostrich).